Reading from the N-terminus, the 623-residue chain is Glutathione import ATP-binding protein GsiA (623 aa).

2 consecutive ABC transporter domains span residues 15–269 (VENL…RALL) and 314–564 (LRVR…RKLL). ATP contacts are provided by residues 49 to 56 (GESGSGKS) and 357 to 364 (GESGSGKS).

This sequence belongs to the ABC transporter superfamily. Glutathione importer (TC 3.A.1.5.11) family. The complex is composed of two ATP-binding proteins (GsiA), two transmembrane proteins (GsiC and GsiD) and a solute-binding protein (GsiB).

It is found in the cell inner membrane. It catalyses the reaction glutathione(out) + ATP + H2O = glutathione(in) + ADP + phosphate + H(+). In terms of biological role, part of the ABC transporter complex GsiABCD involved in glutathione import. Responsible for energy coupling to the transport system. The sequence is that of Glutathione import ATP-binding protein GsiA from Escherichia coli O157:H7.